The primary structure comprises 202 residues: Small ribosomal subunit protein uS4 (202 aa).

The tract at residues 23-42 (RKNARRAYAPGQHGQARKKR) is disordered. An S4 RNA-binding domain is found at 90 to 153 (MRLDNTVFRL…RSQDLVKRNM (64 aa)).

Belongs to the universal ribosomal protein uS4 family. In terms of assembly, part of the 30S ribosomal subunit. Contacts protein S5. The interaction surface between S4 and S5 is involved in control of translational fidelity.

One of the primary rRNA binding proteins, it binds directly to 16S rRNA where it nucleates assembly of the body of the 30S subunit. Functionally, with S5 and S12 plays an important role in translational accuracy. The chain is Small ribosomal subunit protein uS4 from Microcystis aeruginosa (strain NIES-843 / IAM M-2473).